The chain runs to 759 residues: Probable Na(+)/H(+) antiporter C3A11.09 (759 aa).

Helical transmembrane passes span 12 to 32 (HLAY…SLII), 36 to 56 (LFLG…PYVA), 105 to 125 (MLLP…YALI), 133 to 153 (SLAI…SIVG), 172 to 192 (ESGC…YLII), 206 to 226 (IIIL…GVIA), 244 to 264 (FLVF…IIGV), 295 to 315 (VIDL…MPWP), 319 to 339 (MPHM…ILIA), 361 to 381 (ALFA…CLVA), and 415 to 435 (VVCF…AFFM). At Thr442 the chain carries Phosphothreonine. Ser446 bears the Phosphoserine mark. Phosphothreonine is present on Thr448. Composition is skewed to basic and acidic residues over residues 514–529 (LREE…HYDA), 537–547 (YESRQPRRSNE), 590–601 (IDEKLAQGDPKA), 622–647 (NLHE…ENHR), and 655–671 (SESH…RREQ). Disordered regions lie at residues 514–558 (LREE…NPGD), 578–606 (SHTS…SFGR), and 622–759 (NLHE…RAWE). Over residues 696–713 (NENNESSSDTRNGLLSDN) the composition is skewed to polar residues. N-linked (GlcNAc...) asparagine glycosylation is found at Asn699 and Asn713. Over residues 724–733 (RAPSAAVSSE) the composition is skewed to low complexity. Position 735 is a phosphoserine (Ser735).

It belongs to the fungal Na(+)/H(+) exchanger family.

Its subcellular location is the membrane. Functionally, sodium export from cell, takes up external protons in exchange for internal sodium ions. In Schizosaccharomyces pombe (strain 972 / ATCC 24843) (Fission yeast), this protein is Probable Na(+)/H(+) antiporter C3A11.09 (sod22).